A 348-amino-acid chain; its full sequence is Dihydroorotase (348 aa).

Zn(2+) is bound by residues His17 and His19. Substrate-binding positions include 19–21 and Asn45; that span reads HLR. Lys103, His140, and His178 together coordinate Zn(2+). The residue at position 103 (Lys103) is an N6-carboxylysine. Substrate is bound at residue His140. Leu223 lines the substrate pocket. Asp251 provides a ligand contact to Zn(2+). Asp251 is a catalytic residue. Positions 255 and 267 each coordinate substrate.

It belongs to the metallo-dependent hydrolases superfamily. DHOase family. Class II DHOase subfamily. As to quaternary structure, homodimer. The cofactor is Zn(2+). Requires Co(2+) as cofactor. Mg(2+) serves as cofactor. It depends on Ni(2+) as a cofactor.

It carries out the reaction (S)-dihydroorotate + H2O = N-carbamoyl-L-aspartate + H(+). It functions in the pathway pyrimidine metabolism; UMP biosynthesis via de novo pathway; (S)-dihydroorotate from bicarbonate: step 3/3. In terms of biological role, catalyzes the reversible cyclization of carbamoyl aspartate to dihydroorotate. This chain is Dihydroorotase, found in Klebsiella pneumoniae subsp. pneumoniae (strain ATCC 700721 / MGH 78578).